We begin with the raw amino-acid sequence, 252 residues long: Triosephosphate isomerase (252 aa).

8 to 10 is a binding site for substrate; the sequence is NWK. Histidine 95 serves as the catalytic Electrophile. Residue glutamate 167 is the Proton acceptor of the active site. Residues glycine 173, serine 212, and 233–234 each bind substrate; that span reads GG.

This sequence belongs to the triosephosphate isomerase family. Homodimer.

It is found in the cytoplasm. It carries out the reaction D-glyceraldehyde 3-phosphate = dihydroxyacetone phosphate. It participates in carbohydrate biosynthesis; gluconeogenesis. It functions in the pathway carbohydrate degradation; glycolysis; D-glyceraldehyde 3-phosphate from glycerone phosphate: step 1/1. Its function is as follows. Involved in the gluconeogenesis. Catalyzes stereospecifically the conversion of dihydroxyacetone phosphate (DHAP) to D-glyceraldehyde-3-phosphate (G3P). This is Triosephosphate isomerase from Lawsonia intracellularis (strain PHE/MN1-00).